A 1239-amino-acid chain; its full sequence is Structural polyprotein (1239 aa).

The segment at 1–35 (MFPYPTLNYPPMAPINPMAYRDPNPPRQVAPFRPP) is necessary for nucleocapsid assembly and virus assembly. The disordered stretch occupies residues 1–101 (MFPYPTLNYP…RKPKPGKRQR (101 aa)). The segment covering 23 to 34 (PNPPRQVAPFRP) has biased composition (pro residues). The tract at residues 36 to 69 (LAAQIEDLRRSIANLTLKQRAPNPPAGPPAKRKK) is host transcription inhibition. The short motif at 43 to 50 (LRRSIANL) is the Supraphysiological nuclear export signal element. A glycan (N-linked (GlcNAc...) asparagine; by host) is linked at N49. A Nuclear localization signal motif is present at residues 66-69 (KRKK). Basic residues predominate over residues 79–101 (KKKRPPPPAKKQKRKPKPGKRQR). The interval 81–111 (KRPPPPAKKQKRKPKPGKRQRMCMKLESDKT) is binding to the viral RNA. The tract at residues 96–110 (PGKRQRMCMKLESDK) is ribosome-binding. A Phosphoserine modification is found at S108. The Peptidase S3 domain maps to 110-259 (KTFPIMLNGQ…KDTPEGSEPW (150 aa)). T111 carries the phosphothreonine modification. The active-site Charge relay system is the H136. The tract at residues 152-157 (KKASIY) is interaction with spike glycoprotein E2. Residues D158 and S210 each act as charge relay system in the active site. Positions 244 to 248 (QKGVT) are interaction with spike glycoprotein E2. The functions as an uncleaved signal peptide for the precursor of protein E3/E2 stretch occupies residues 260 to 271 (SLATVMCVLANI). At 260 to 681 (SLATVMCVLA…HVVVVYYYNR (422 aa)) the chain is on the extracellular side. Cystine bridges form between C266–C275, C280–C284, C283–C315, C341–C444, C344–C349, C411–C425, C472–C585, C521–C545, and C523–C539. N-linked (GlcNAc...) asparagine; by host glycosylation occurs at N270. Residue N637 is glycosylated (N-linked (GlcNAc...) asparagine; by host). Residues 682-702 (YPLTTIIGLCTCVAIIMVSCD) form a helical membrane-spanning segment. Over 703–742 (HPCGSFSGLRNLCITPYKLAPNAQVPILLALLCCIKPTRA) the chain is Cytoplasmic. The S-palmitoyl cysteine; by host moiety is linked to residue C705. The interval 710 to 714 (GLRNL) is interaction with the capsid protein. Positions 714 to 734 (LCITPYKLAPNAQVPILLALL) are transient transmembrane before p62-6K protein processing. 3 S-palmitoyl cysteine; by host lipidation sites follow: C715, C735, and C736. A disulfide bridge connects residues C715 and C736. At 743–754 (DDTLQVLNYLWN) the chain is on the extracellular side. The chain crosses the membrane as a helical span at residues 755–775 (NNQNFFWMQTLIPLAALIVCM). A topological domain (cytoplasmic) is located at residue R776. A helical transmembrane segment spans residues 777–797 (MLAALFCCGPAFLLVCGAWAA). The Extracellular portion of the chain corresponds to 798–1215 (AYEHTAVMPN…WSWLKVLVGG (418 aa)). 4 disulfides stabilise this stretch: C847/C912, C860/C892, C861/C894, and C866/C876. Residues 882–899 (VYPFMWGGAYCFCDTENT) are E1 fusion peptide loop. 2 N-linked (GlcNAc...) asparagine; by host glycosylation sites follow: N932 and N1069. 3 disulfide bridges follow: C1058–C1070, C1100–C1175, and C1105–C1179. A helical transmembrane segment spans residues 1216-1236 (TSAFIVLGLIATAVVALVLFF). The Cytoplasmic portion of the chain corresponds to 1237 to 1239 (HRH).

Homodimer. Homomultimer. Interacts with host karyopherin KPNA4; this interaction allows the nuclear import of the viral capsid protein. Interacts with spike glycoprotein E2. Interacts with host IRAK1; the interaction leads to inhibition of IRAK1-dependent signaling. Part of a tetrameric complex composed of host CRM1, host importin alpha/beta dimer and the viral capsid; this complex blocks the receptor-mediated transport through the nuclear pore. Interacts with host phosphatase PPP1CA; this interaction dephosphorylates the capsid protein, which increases its ability to bind to the viral genome. In terms of assembly, the precursor of protein E3/E2 and E1 form a heterodimer shortly after synthesis. As to quaternary structure, the precursor of protein E3/E2 and E1 form a heterodimer shortly after synthesis. Processing of the precursor of protein E3/E2 into E2 and E3 results in a heterodimer of the spike glycoproteins E2 and E1. Spike at virion surface are constituted of three E2-E1 heterodimers. After target cell attachment and endocytosis, E1 change conformation to form homotrimers. E2-E1 heterodimers interact with host VLDLR or LRP8/APOER2 to mediate viral entry. Interacts with 6K protein. Interacts with spike glycoprotein E1. Processing of the precursor of protein E3/E2 into E2 and E3 results in a heterodimer of the spike glycoproteins E2 and E1. Spike at virion surface are constituted of a trimer of E2-E1 heterodimers. Interacts with 6K protein. E2-E1 heterodimers interact with host VLDLR or LRP8/APOER2 to mediate viral entry. Interacts (via E2-A) with host VLDLR (via class A repeats); this interaction mediates viral entry into host cell. Interacts with host LRP8/APOER2 (via class A repeats); this interaction mediates viral entry into host cell. In terms of assembly, oligomer. Interacts with spike glycoprotein E1. Interacts with spike glycoprotein E2. In terms of processing, structural polyprotein: Specific enzymatic cleavages in vivo yield mature proteins. Capsid protein is auto-cleaved during polyprotein translation, unmasking a signal peptide at the N-terminus of the precursor of E3/E2. The remaining polyprotein is then targeted to the host endoplasmic reticulum, where host signal peptidase cleaves it into pE2, 6K and E1 proteins. pE2 is further processed to mature E3 and E2 by host furin in trans-Golgi vesicle. Post-translationally, phosphorylated on serine and threonine residues. Palmitoylated via thioester bonds. These palmitoylations may induce disruption of the C-terminus transmembrane. This would result in the reorientation of E2 C-terminus from lumenal to cytoplasmic side. In terms of processing, N-glycosylated. Post-translationally, palmitoylated via thioester bonds.

The protein localises to the virion. It is found in the host cytoplasm. It localises to the host cell membrane. The protein resides in the host nucleus. Its subcellular location is the virion membrane. The protein localises to the host Golgi apparatus. It is found in the host trans-Golgi network. It localises to the host endoplasmic reticulum. The enzyme catalyses Autocatalytic release of the core protein from the N-terminus of the togavirus structural polyprotein by hydrolysis of a -Trp-|-Ser- bond.. In terms of biological role, forms an icosahedral capsid with a T=4 symmetry composed of 240 copies of the capsid protein surrounded by a lipid membrane through which penetrate 80 spikes composed of trimers of E1-E2 heterodimers. The capsid protein binds to the viral RNA genome at a site adjacent to a ribosome binding site for viral genome translation following genome release. Possesses a protease activity that results in its autocatalytic cleavage from the nascent structural protein. Following its self-cleavage, the capsid protein transiently associates with ribosomes, and within several minutes the protein binds to viral RNA and rapidly assembles into icosahedric core particles. The resulting nucleocapsid eventually associates with the cytoplasmic domain of the spike glycoprotein E2 at the cell membrane, leading to budding and formation of mature virions. In case of infection, new virions attach to target cells and after clathrin-mediated endocytosis their membrane fuses with the host endosomal membrane. This leads to the release of the nucleocapsid into the cytoplasm, followed by an uncoating event necessary for the genomic RNA to become accessible. The uncoating might be triggered by the interaction of capsid proteins with ribosomes. Binding of ribosomes would release the genomic RNA since the same region is genomic RNA-binding and ribosome-binding. Specifically inhibits interleukin-1 receptor-associated kinase 1/IRAK1-dependent signaling during viral entry, representing a means by which the alphaviruses may evade innate immune detection and activation prior to viral gene expression. Inhibits host transcription. Forms a tetrameric complex with XPO1/CRM1 and the nuclear import receptor importin. This complex blocks the central channel of host nuclear pores thereby inhibiting the receptor-mediated nuclear transport and thus the host mRNA and rRNA transcription. The inhibition of transcription is linked to a cytopathic effect on the host cell. Functionally, provides the signal sequence for the translocation of the precursor of protein E3/E2 to the host endoplasmic reticulum. Furin-cleaved E3 remains associated with spike glycoprotein E1 and mediates pH protection of the latter during the transport via the secretory pathway. After virion release from the host cell, the assembly protein E3 is gradually released in the extracellular space. Plays a role in viral attachment to target host cell, by binding to the cell receptors VLDLR or LRP8/APOER2. Synthesized as a p62 precursor which is processed by furin at the cell membrane just before virion budding, giving rise to E2-E1 heterodimer. The p62-E1 heterodimer is stable, whereas E2-E1 is unstable and dissociate at low pH. p62 is processed at the last step, presumably to avoid E1 fusion activation before its final export to cell surface. E2 C-terminus contains a transitory transmembrane that would be disrupted by palmitoylation, resulting in reorientation of the C-terminal tail from lumenal to cytoplasmic side. This step is critical since E2 C-terminus is involved in budding by interacting with capsid proteins. This release of E2 C-terminus in cytoplasm occurs lately in protein export, and precludes premature assembly of particles at the endoplasmic reticulum membrane. Its function is as follows. Acts as a viroporin that participates in virus glycoprotein processing and transport to the plasma membrane, cell permeabilization and budding of viral particles. Disrupts the calcium homeostasis of the cell, probably at the endoplasmic reticulum level. This leads to cytoplasmic calcium elevation. Because of its lipophilic properties, the 6K protein is postulated to influence the selection of lipids that interact with the transmembrane domains of the glycoproteins, which, in turn, affects the deformability of the bilayer required for the extreme curvature that occurs as budding proceeds. Present in low amount in virions, about 3% compared to viral glycoproteins. In terms of biological role, class II viral fusion protein. Fusion activity is inactive as long as E1 is bound to E2 in mature virion. After virus attachment to target cell via host VLDLR or LRP8/APOER2 and endocytosis, acidification of the endosome induces dissociation of E1/E2 heterodimer and concomitant trimerization of the E1 subunits. This E1 trimer is fusion active, and promotes release of viral nucleocapsid in cytoplasm after endosome and viral membrane fusion. Efficient fusion requires the presence of cholesterol and sphingolipid in the target membrane. The sequence is that of Structural polyprotein from Aedes (Human).